Here is a 441-residue protein sequence, read N- to C-terminus: Insulinoma-associated protein 1 (441 aa).

Residues 1–12 (MPKGFLVKRSRK) show a composition bias toward basic residues. The interval 1–20 (MPKGFLVKRSRKSPPVSYRV) is SNAG domain. Disordered regions lie at residues 1–31 (MPKG…GESL), 43–189 (TGGA…KAIR), 205–224 (LKIK…SSGP), and 278–316 (RWHK…EDGL). Basic and acidic residues predominate over residues 19-28 (RVREEEEPRG). The span at 74 to 83 (NPDTVQQALY) shows a compositional bias: polar residues. Residues 89–98 (VSREQRERKY) are compositionally biased toward basic and acidic residues. 2 stretches are compositionally biased toward low complexity: residues 138–147 (VSSSSSVSRS) and 169–180 (GATSSSAPSKPP). A C2H2-type 1 zinc finger spans residues 258–280 (YRCPECHKVFSCPANLASHRRWH). Residues 292–302 (AKEEPLSDRDT) are compositionally biased toward basic and acidic residues. 3 C2H2-type zinc fingers span residues 317-339 (YECP…LLSH), 372-395 (HPCP…RLLH), and 400-423 (YPCK…NKCH).

It belongs to the INSM1 family.

It localises to the nucleus. Functionally, may act as a transcriptional regulator. Plays a role in noradrenergic neuron, pancreatic and gastrointestinal endocrine cells differentiation during embryonic development. This is Insulinoma-associated protein 1 (insm1) from Xenopus tropicalis (Western clawed frog).